Consider the following 213-residue polypeptide: Octanoyltransferase (213 aa).

The BPL/LPL catalytic domain occupies 35 to 213; that stretch reads DERGDAVLLL…ERHLPTLIEP (179 aa). Substrate contacts are provided by residues 73–80, 145–147, and 158–160; these read RGGKITWH, AIG, and GFS. The active-site Acyl-thioester intermediate is the Cys-176.

This sequence belongs to the LipB family.

It is found in the cytoplasm. It carries out the reaction octanoyl-[ACP] + L-lysyl-[protein] = N(6)-octanoyl-L-lysyl-[protein] + holo-[ACP] + H(+). The protein operates within protein modification; protein lipoylation via endogenous pathway; protein N(6)-(lipoyl)lysine from octanoyl-[acyl-carrier-protein]: step 1/2. Its function is as follows. Catalyzes the transfer of endogenously produced octanoic acid from octanoyl-acyl-carrier-protein onto the lipoyl domains of lipoate-dependent enzymes. Lipoyl-ACP can also act as a substrate although octanoyl-ACP is likely to be the physiological substrate. The polypeptide is Octanoyltransferase (Salinispora tropica (strain ATCC BAA-916 / DSM 44818 / JCM 13857 / NBRC 105044 / CNB-440)).